Consider the following 95-residue polypeptide: Auxin-responsive protein SAUR27 (95 aa).

It belongs to the ARG7 family. In terms of assembly, interacts with PP2C-D1. As to expression, higher expression in thermo-responsive cultivars (e.g. cv. Alst-1, cv. Ang-0 and cv. Com-0) than in low thermo-responsive cultivars (e.g. cv. Dja-1, cv. El-0 and cv. Kon).

The protein localises to the cell membrane. Functions as a positive effector of cell expansion through modulation of auxin transport. Involved in thermo-responsiveness of plant architecture. Enhances plasma membrane H(+)-ATPase. The chain is Auxin-responsive protein SAUR27 from Arabidopsis thaliana (Mouse-ear cress).